Consider the following 736-residue polypeptide: Prolyl oligopeptidase dbiP (736 aa).

Active-site charge relay system residues include S572, D656, and H692.

This sequence belongs to the peptidase S9A family. As to quaternary structure, monomer.

It catalyses the reaction Hydrolysis of Pro-|-Xaa &gt;&gt; Ala-|-Xaa in oligopeptides.. It participates in mycotoxin biosynthesis. Prolyl oligopeptidase; part of the gene cluster that mediates the biosynthesis of dendrothelin A, a highly methylated cyclic dodecapeptide showing slight nematodicidal activity. Excises and catalyzes the macrocyclization of the methylated core peptide of dbiMA to yield dendrothelin A. DbiP works in a two-step fashion with an initial cleavage at the N-terminus, followed by a second cleavage at the C-terminus of the core peptide. According to this mechanism, the free N-terminus of the core peptide, generated by the first cleavage, attacks the covalent intermediate of the second cleavage, which results in macrocyclization of the core peptide. This chain is Prolyl oligopeptidase dbiP, found in Dendrothele bispora (strain CBS 962.96).